A 433-amino-acid chain; its full sequence is Apolipoprotein L5 (433 aa).

The segment at 346-433 (HHRHLPQKAS…GRQAPGRHRQ (88 aa)) is disordered. Residues 359–371 (SSSRGRAVRGSRV) are compositionally biased toward low complexity. Positions 422–433 (RKGRQAPGRHRQ) are enriched in basic residues.

It belongs to the apolipoprotein L family. In terms of tissue distribution, low level of expression; detected in uterus, testis, skeletal muscle and stomach.

It localises to the cytoplasm. Functionally, may affect the movement of lipids in the cytoplasm or allow the binding of lipids to organelles. This is Apolipoprotein L5 (APOL5) from Homo sapiens (Human).